A 404-amino-acid chain; its full sequence is Cysteine desulfurase IscS (404 aa).

Pyridoxal 5'-phosphate is bound by residues 75–76, Asn155, Gln183, and 203–205; these read AT and SAH. At Lys206 the chain carries N6-(pyridoxal phosphate)lysine. Thr243 serves as a coordination point for pyridoxal 5'-phosphate. The Cysteine persulfide intermediate role is filled by Cys328. Cys328 serves as a coordination point for [2Fe-2S] cluster.

Belongs to the class-V pyridoxal-phosphate-dependent aminotransferase family. NifS/IscS subfamily. In terms of assembly, homodimer. Forms a heterotetramer with IscU, interacts with other sulfur acceptors. The cofactor is pyridoxal 5'-phosphate.

The protein resides in the cytoplasm. The catalysed reaction is (sulfur carrier)-H + L-cysteine = (sulfur carrier)-SH + L-alanine. It participates in cofactor biosynthesis; iron-sulfur cluster biosynthesis. Its function is as follows. Master enzyme that delivers sulfur to a number of partners involved in Fe-S cluster assembly, tRNA modification or cofactor biosynthesis. Catalyzes the removal of elemental sulfur atoms from cysteine to produce alanine. Functions as a sulfur delivery protein for Fe-S cluster synthesis onto IscU, an Fe-S scaffold assembly protein, as well as other S acceptor proteins. This Vibrio vulnificus (strain CMCP6) protein is Cysteine desulfurase IscS.